The sequence spans 187 residues: Protein GrpE (187 aa).

The disordered stretch occupies residues 1–31; the sequence is MEKKETKNDAEKNNKQDNKSTKSQKKENLNL.

It belongs to the GrpE family. Homodimer.

It is found in the cytoplasm. In terms of biological role, participates actively in the response to hyperosmotic and heat shock by preventing the aggregation of stress-denatured proteins, in association with DnaK and GrpE. It is the nucleotide exchange factor for DnaK and may function as a thermosensor. Unfolded proteins bind initially to DnaJ; upon interaction with the DnaJ-bound protein, DnaK hydrolyzes its bound ATP, resulting in the formation of a stable complex. GrpE releases ADP from DnaK; ATP binding to DnaK triggers the release of the substrate protein, thus completing the reaction cycle. Several rounds of ATP-dependent interactions between DnaJ, DnaK and GrpE are required for fully efficient folding. The protein is Protein GrpE of Borrelia garinii subsp. bavariensis (strain ATCC BAA-2496 / DSM 23469 / PBi) (Borreliella bavariensis).